A 344-amino-acid polypeptide reads, in one-letter code: Deoxyhypusine hydroxylase (344 aa).

2 HEAT-like PBS-type repeats span residues 81–107 (LKHE…VLED) and 115–140 (RHEA…FRDR). Residues H83, E84, H116, and E117 each coordinate Fe cation. The tract at residues 169–188 (EKLRASDFSSVDPAPPTAQG) is disordered. HEAT-like PBS-type repeat units follow at residues 210–240 (KRYR…LAKG), 248–274 (FRHE…ALSN), and 281–308 (VRHE…FLHD). Fe cation-binding residues include H250, E251, H283, and E284.

This sequence belongs to the deoxyhypusine hydroxylase family. Requires Fe(2+) as cofactor.

It localises to the cytoplasm. Its subcellular location is the nucleus. It catalyses the reaction [eIF5A protein]-deoxyhypusine + AH2 + O2 = [eIF5A protein]-hypusine + A + H2O. The protein operates within protein modification; eIF5A hypusination. Its function is as follows. Catalyzes the hydroxylation of the N(6)-(4-aminobutyl)-L-lysine intermediate to form hypusine, an essential post-translational modification only found in mature eIF-5A factor. This is Deoxyhypusine hydroxylase from Chaetomium globosum (strain ATCC 6205 / CBS 148.51 / DSM 1962 / NBRC 6347 / NRRL 1970) (Soil fungus).